The primary structure comprises 457 residues: Argininosuccinate lyase (457 aa).

This sequence belongs to the lyase 1 family. Argininosuccinate lyase subfamily.

It localises to the cytoplasm. It carries out the reaction 2-(N(omega)-L-arginino)succinate = fumarate + L-arginine. It participates in amino-acid biosynthesis; L-arginine biosynthesis; L-arginine from L-ornithine and carbamoyl phosphate: step 3/3. The protein is Argininosuccinate lyase of Escherichia coli O127:H6 (strain E2348/69 / EPEC).